Consider the following 196-residue polypeptide: MGRRKVEIKRIENKSSRQVTFSKRRKGLIEKARQLSILCESSIAVVAVSGSGKLYDSASGDNMSKIIDRYEIHHADELKALDLAEKIRNYLPHKELLEIVQSKLEESNVDNVSVDSLISMEEQLETALSVIRAKKTELMMEDMKSLQEREKLLIEENQILASQVGKKTFLVIEGDRGMSRENGSGNKVPETLSLLK.

The MADS-box domain occupies 1 to 61; it reads MGRRKVEIKR…GKLYDSASGD (61 aa). A Nuclear localization signal motif is present at residues 8–15; it reads IKRIENKS. The K-box domain occupies 80-170; that stretch reads ALDLAEKIRN…ASQVGKKTFL (91 aa).

Mostly expressed in roots, leaves and flowers, and, to a lower extent, in inflorescence, siliques, pollen and shoots.

Its subcellular location is the nucleus. Probable transcription factor involved in the negative regulation of flowering time, probably through the photoperiodic and vernalization pathways; more efficient in cv. Landsberg erecta than in cv. Columbia background. Prevents premature flowering. Involved in the modulation of vernalization impact on flowering according to genotype acclimation to altitude. In Arabidopsis thaliana (Mouse-ear cress), this protein is Agamous-like MADS-box protein AGL70.